We begin with the raw amino-acid sequence, 855 residues long: tRNA(Met) cytidine acetyltransferase TmcA (855 aa).

ATP is bound by residues glutamine 260, 286–295, and arginine 438; that span reads GRGKSALLGI. Positions 480–663 constitute an N-acetyltransferase domain; that stretch reads PDLRYWFEDP…GEYSVAVIRP (184 aa). Residues 590–592, 597–603, glutamate 630, and arginine 637 each bind acetyl-CoA; these read IAT and MRHGLGS.

Belongs to the RNA cytidine acetyltransferase family. TmcA subfamily.

The protein resides in the cytoplasm. The enzyme catalyses cytidine(34) in elongator tRNA(Met) + acetyl-CoA + ATP + H2O = N(4)-acetylcytidine(34) in elongator tRNA(Met) + ADP + phosphate + CoA + H(+). Functionally, catalyzes the formation of N(4)-acetylcytidine (ac(4)C) at the wobble position of tRNA(Met), by using acetyl-CoA as an acetyl donor and ATP (or GTP). This chain is tRNA(Met) cytidine acetyltransferase TmcA, found in Methanopyrus kandleri (strain AV19 / DSM 6324 / JCM 9639 / NBRC 100938).